The sequence spans 594 residues: Solute carrier family 22 member 14 (594 aa).

Residues 1–70 lie on the Cytoplasmic side of the membrane; it reads MAGEENFKEE…EFGTFQQRLV (70 aa). A helical transmembrane segment spans residues 71 to 91; sequence ALTFIPSIMSAFFMFADHFVF. Topologically, residues 92 to 184 are extracellular; sequence TAQKPYCNTS…LVCGMETKKD (93 aa). N-linked (GlcNAc...) asparagine glycosylation is found at Asn99, Asn117, Asn125, and Asn150. A helical membrane pass occupies residues 185 to 205; sequence TAQIMFMAGLPIGSLIFRLIT. At 206-210 the chain is on the cytoplasmic side; that stretch reads DKMGR. Residues 211–231 form a helical membrane-spanning segment; that stretch reads YPAILLSLLGLIIFGFGTAFM. Topologically, residues 232-235 are extracellular; sequence NSFH. Residues 236-256 form a helical membrane-spanning segment; that stretch reads LYLFFRFGISQSVVGYAISSI. Over 257–270 the chain is Cytoplasmic; the sequence is SLATEWLVGEHRAH. Residues 271-291 form a helical membrane-spanning segment; it reads AIILGHCFFAVGAVLLTGIAY. Over 292–297 the chain is Extracellular; that stretch reads SLPHWQ. A helical membrane pass occupies residues 298–318; the sequence is LLFLVGGILVIPFISYIWILP. The Cytoplasmic portion of the chain corresponds to 319 to 379; the sequence is ESPRWLMMKG…DFCKNRQLCK (61 aa). Residues 380-400 traverse the membrane as a helical segment; the sequence is VTLVMSCVWFTVSYTYFTLSL. At 401 to 408 the chain is on the extracellular side; sequence RMRELGVS. The helical transmembrane segment at 409–431 threads the bilayer; the sequence is VHFRHVVPSIMEVPARLCCIFLL. Over 432 to 437 the chain is Cytoplasmic; it reads QQIGRK. The chain crosses the membrane as a helical span at residues 438-458; the sequence is WSLAVTLLQAIIWCLLLLFLP. At 459–488 the chain is on the extracellular side; that stretch reads EGEDGLRLKWPRCPATELKSMTILVLMLRE. Residues 489–509 form a helical membrane-spanning segment; sequence FSLAATVTVFFLYTAELLPTV. At 510 to 512 the chain is on the cytoplasmic side; sequence LRA. The helical transmembrane segment at 513–533 threads the bilayer; sequence TGLGLVSLASVAGAILSLTII. Residues 534-538 lie on the Extracellular side of the membrane; that stretch reads SQTPS. Residues 539–559 traverse the membrane as a helical segment; sequence LLPIFLCCVLAIVAFSLSSLL. Topologically, residues 560–594 are cytoplasmic; sequence PETRDQPLSESLNHSSQIRNKVKDMKTKETSSDDV. The disordered stretch occupies residues 566–594; that stretch reads PLSESLNHSSQIRNKVKDMKTKETSSDDV. The segment covering 567–578 has biased composition (polar residues); sequence LSESLNHSSQIR. A compositionally biased stretch (basic and acidic residues) spans 580–594; sequence KVKDMKTKETSSDDV.

The protein belongs to the major facilitator (TC 2.A.1) superfamily. Organic cation transporter (TC 2.A.1.19) family. In terms of tissue distribution, ubiquitous.

The protein resides in the mitochondrion inner membrane. The protein localises to the cell projection. Its subcellular location is the cilium. It localises to the flagellum membrane. It carries out the reaction riboflavin(in) = riboflavin(out). In terms of biological role, riboflavin transporter localized at the inner mitochondrial membrane of the spermatozoa midpiece, which is required for male fertility. SLC22A14-mediated riboflavin transport is essential for spermatozoa energy generation and motility: riboflavin is the precursor of FMN and FAD, which are coenzymes of many enzymes in the TCA cycle (the citric acid cycle) in mitochondria. Required for sperm motility and normal sperm flagellar structure. In Homo sapiens (Human), this protein is Solute carrier family 22 member 14.